The chain runs to 407 residues: GTPase Obg (407 aa).

The Obg domain occupies 1 to 159; the sequence is MKFVDEVSIR…RDLKLEMKVL (159 aa). Residues 128–148 are disordered; sequence TRFKSSTNRAPRQTTPGKPGE. Positions 129 to 143 are enriched in polar residues; sequence RFKSSTNRAPRQTTP. The OBG-type G domain occupies 160 to 333; the sequence is ADVGLLGLPN…LTRDIMRYLE (174 aa). Residues 166–173, 191–195, 213–216, 283–286, and 314–316 contribute to the GTP site; these read GLPNAGKS, FTTLV, DIPG, NKCD, and SAI. 2 residues coordinate Mg(2+): S173 and T193. The interval 376 to 407 is disordered; sequence SGVKSVHDIGDDDWDEEDVDDEDGPEIIYVRD. Acidic residues predominate over residues 385 to 400; it reads GDDDWDEEDVDDEDGP.

The protein belongs to the TRAFAC class OBG-HflX-like GTPase superfamily. OBG GTPase family. As to quaternary structure, monomer. The cofactor is Mg(2+).

It is found in the cytoplasm. An essential GTPase which binds GTP, GDP and possibly (p)ppGpp with moderate affinity, with high nucleotide exchange rates and a fairly low GTP hydrolysis rate. Plays a role in control of the cell cycle, stress response, ribosome biogenesis and in those bacteria that undergo differentiation, in morphogenesis control. The protein is GTPase Obg of Pseudomonas fluorescens (strain Pf0-1).